A 127-amino-acid polypeptide reads, in one-letter code: Small ribosomal subunit protein uS11 (127 aa).

This sequence belongs to the universal ribosomal protein uS11 family. In terms of assembly, part of the 30S ribosomal subunit. Interacts with proteins S7 and S18. Binds to IF-3.

In terms of biological role, located on the platform of the 30S subunit, it bridges several disparate RNA helices of the 16S rRNA. Forms part of the Shine-Dalgarno cleft in the 70S ribosome. This Rhodopirellula baltica (strain DSM 10527 / NCIMB 13988 / SH1) protein is Small ribosomal subunit protein uS11.